The following is a 70-amino-acid chain: MMQIKYLFALFAVLMLVVLGANEADADCLSGRYKGPCAVWDNETCRRVCKEEGRSSGHCSPSLKCWCEGC.

The first 20 residues, 1–20 (MMQIKYLFALFAVLMLVVLG), serve as a signal peptide directing secretion. A propeptide spanning residues 21–26 (ANEADA) is cleaved from the precursor. Cystine bridges form between C28–C70, C37–C59, C45–C65, and C49–C67. N-linked (GlcNAc...) asparagine glycosylation is present at N42.

Hemolymph (at protein level). Synthesized in the fat body and is secreted into the blood. In larvae, expressed in the visceral branches and posterior spiracles of the trachea.

It localises to the secreted. In terms of biological role, possesses antifungal activity and is active against a relatively broad spectrum of filamentous fungi. It inhibits spore germination at high concentrations and at low concentrations delays growth of hyphae which subsequently exhibit abnormal morphology. Spz C-106 in the hemolymph controls expression of the antifungal peptide by acting as a ligand of Tl and inducing an intracellular signaling pathway. Part of a psh-dependent Toll pathway, which may function in activating the systematic immune response in response to localized melanization of the tracheal system. The protein is Drosomycin (Drs) of Drosophila melanogaster (Fruit fly).